Here is a 217-residue protein sequence, read N- to C-terminus: MTQDEMKKAAGWAALKYVVPGTIVGVGTGSTVNHFIDALATMKDEIKGAVSSSVASTERLKGFGITVYDLNEIDALSVYVDGADEINGTRDMIKGGGAALTREKIVAAVADKFICIIDNTKTVDVLGTFPLPVEVIPMAREYVAREIRKLGGNPVWREGVVTDNGNHILDVKGMAITDAKGLEVQLNAIVGTVTNGLFAHRGADVVLIGTPDGVITQ.

Substrate is bound by residues 28-31 (TGST), 81-84 (DGAD), and 94-97 (KGGG). Residue Glu-103 is the Proton acceptor of the active site. Lys-121 provides a ligand contact to substrate.

It belongs to the ribose 5-phosphate isomerase family. In terms of assembly, homodimer.

It carries out the reaction aldehydo-D-ribose 5-phosphate = D-ribulose 5-phosphate. The protein operates within carbohydrate degradation; pentose phosphate pathway; D-ribose 5-phosphate from D-ribulose 5-phosphate (non-oxidative stage): step 1/1. Its function is as follows. Catalyzes the reversible conversion of ribose-5-phosphate to ribulose 5-phosphate. This is Ribose-5-phosphate isomerase A from Aeromonas hydrophila subsp. hydrophila (strain ATCC 7966 / DSM 30187 / BCRC 13018 / CCUG 14551 / JCM 1027 / KCTC 2358 / NCIMB 9240 / NCTC 8049).